Reading from the N-terminus, the 87-residue chain is Large ribosomal subunit protein bL27 (87 aa).

It belongs to the bacterial ribosomal protein bL27 family.

The sequence is that of Large ribosomal subunit protein bL27 from Phocaeicola vulgatus (strain ATCC 8482 / DSM 1447 / JCM 5826 / CCUG 4940 / NBRC 14291 / NCTC 11154) (Bacteroides vulgatus).